The chain runs to 154 residues: MNATLLGQAIAFTLFVWFCMKYVWPPIMEAIEERQKKIADGLSAAERAAKDLDLAQANASDQLKEAKRAATEIIEQANKRKSQILDEAREEALVERQKILTQGEAELESERNRARDELRKQVATLAVIGAEKILERSIDVEAQKDILDNITAKL.

A helical membrane pass occupies residues 5–27 (LLGQAIAFTLFVWFCMKYVWPPI).

This sequence belongs to the ATPase B chain family. As to quaternary structure, F-type ATPases have 2 components, F(1) - the catalytic core - and F(0) - the membrane proton channel. F(1) has five subunits: alpha(3), beta(3), gamma(1), delta(1), epsilon(1). F(0) has three main subunits: a(1), b(2) and c(10-14). The alpha and beta chains form an alternating ring which encloses part of the gamma chain. F(1) is attached to F(0) by a central stalk formed by the gamma and epsilon chains, while a peripheral stalk is formed by the delta and b chains.

The protein localises to the cell inner membrane. F(1)F(0) ATP synthase produces ATP from ADP in the presence of a proton or sodium gradient. F-type ATPases consist of two structural domains, F(1) containing the extramembraneous catalytic core and F(0) containing the membrane proton channel, linked together by a central stalk and a peripheral stalk. During catalysis, ATP synthesis in the catalytic domain of F(1) is coupled via a rotary mechanism of the central stalk subunits to proton translocation. Its function is as follows. Component of the F(0) channel, it forms part of the peripheral stalk, linking F(1) to F(0). The protein is ATP synthase subunit b of Aliivibrio fischeri (strain ATCC 700601 / ES114) (Vibrio fischeri).